A 538-amino-acid chain; its full sequence is Phospho-2-dehydro-3-deoxyheptonate aldolase 1, chloroplastic (538 aa).

Residues 1–74 constitute a chloroplast transit peptide; the sequence is MALSSTSTTN…KPSKSSPPAA (74 aa). Residues 55-82 form a disordered region; the sequence is DSNKIPIVSDKPSKSSPPAATATTAPAP. A compositionally biased stretch (low complexity) spans 68–82; that stretch reads KSSPPAATATTAPAP. Threonine 75 is modified (blocked amino end (Thr)).

The protein belongs to the class-II DAHP synthase family.

The protein localises to the plastid. It is found in the chloroplast. The catalysed reaction is D-erythrose 4-phosphate + phosphoenolpyruvate + H2O = 7-phospho-2-dehydro-3-deoxy-D-arabino-heptonate + phosphate. It participates in metabolic intermediate biosynthesis; chorismate biosynthesis; chorismate from D-erythrose 4-phosphate and phosphoenolpyruvate: step 1/7. Its activity is regulated as follows. Activation by tryptophan (a hysteretic factor). The chain is Phospho-2-dehydro-3-deoxyheptonate aldolase 1, chloroplastic (SHKA) from Solanum tuberosum (Potato).